Here is a 544-residue protein sequence, read N- to C-terminus: Membrane protein insertase YidC (544 aa).

Residues 6–26 (NILLIGLLFVSFLLWQQWQAD) form a helical membrane-spanning segment. The tract at residues 34-58 (AAQTQSSIPASTVADSHSSDVPDAD) is disordered. Positions 39-49 (SSIPASTVADS) are enriched in polar residues. 4 helical membrane-spanning segments follow: residues 345–365 (LLMFFHSIVGNWGFAIILITL), 423–443 (GGCLPILLQMPIFIALYWVLL), 460–480 (LSVQDPYYVLPILMGISMFVM), and 503–523 (VIFTVFFLWFPAGLVLYWLVG).

The protein belongs to the OXA1/ALB3/YidC family. Type 1 subfamily. Interacts with the Sec translocase complex via SecD. Specifically interacts with transmembrane segments of nascent integral membrane proteins during membrane integration.

It localises to the cell inner membrane. Functionally, required for the insertion and/or proper folding and/or complex formation of integral membrane proteins into the membrane. Involved in integration of membrane proteins that insert both dependently and independently of the Sec translocase complex, as well as at least some lipoproteins. Aids folding of multispanning membrane proteins. This Shewanella halifaxensis (strain HAW-EB4) protein is Membrane protein insertase YidC.